Reading from the N-terminus, the 237-residue chain is Phosphoribosylaminoimidazole-succinocarboxamide synthase (237 aa).

It belongs to the SAICAR synthetase family.

It catalyses the reaction 5-amino-1-(5-phospho-D-ribosyl)imidazole-4-carboxylate + L-aspartate + ATP = (2S)-2-[5-amino-1-(5-phospho-beta-D-ribosyl)imidazole-4-carboxamido]succinate + ADP + phosphate + 2 H(+). The protein operates within purine metabolism; IMP biosynthesis via de novo pathway; 5-amino-1-(5-phospho-D-ribosyl)imidazole-4-carboxamide from 5-amino-1-(5-phospho-D-ribosyl)imidazole-4-carboxylate: step 1/2. This Sodalis glossinidius (strain morsitans) protein is Phosphoribosylaminoimidazole-succinocarboxamide synthase.